A 206-amino-acid polypeptide reads, in one-letter code: Tektin bundle-interacting protein 1 (206 aa).

As to quaternary structure, microtubule inner protein component of sperm flagellar doublet microtubules.

Its subcellular location is the cytoplasm. The protein localises to the cytoskeleton. The protein resides in the cilium axoneme. It is found in the flagellum axoneme. Its function is as follows. Microtubule inner protein (MIP) part of the dynein-decorated doublet microtubules (DMTs) in cilia axoneme, which is required for motile cilia beating. Located at the center of the tektin bundle where may function to recruit tektins or stabilize the bundle. In Mus musculus (Mouse), this protein is Tektin bundle-interacting protein 1.